The sequence spans 169 residues: UPF0065 protein in clcB-clcD intergenic region (169 aa).

The protein belongs to the UPF0065 (bug) family.

It is found in the periplasm. This is UPF0065 protein in clcB-clcD intergenic region from Pseudomonas knackmussii (strain DSM 6978 / CCUG 54928 / LMG 23759 / B13).